The chain runs to 217 residues: Probable GTP-binding protein EngB (217 aa).

The EngB-type G domain occupies 37 to 214 (SGLEVAFAGR…RAAMARLIGD (178 aa)). Residues 45–52 (GRSNVGKS), 72–76 (GRTQE), 92–95 (DMPG), 159–162 (TKAD), and 193–195 (TSS) each bind GTP. Residues Ser52 and Thr74 each coordinate Mg(2+).

The protein belongs to the TRAFAC class TrmE-Era-EngA-EngB-Septin-like GTPase superfamily. EngB GTPase family. It depends on Mg(2+) as a cofactor.

Necessary for normal cell division and for the maintenance of normal septation. The sequence is that of Probable GTP-binding protein EngB from Nitrobacter winogradskyi (strain ATCC 25391 / DSM 10237 / CIP 104748 / NCIMB 11846 / Nb-255).